We begin with the raw amino-acid sequence, 321 residues long: F-box protein At4g35930 (321 aa).

Over residues 1–13 (MGKVSPKDLDSKT) the composition is skewed to basic and acidic residues. A disordered region spans residues 1-23 (MGKVSPKDLDSKTSVRKKKLKSS). In terms of domain architecture, F-box spans 159–207 (ESQLESLPMDLLVKIVCHLHHDQLKAVFHVSQRIRMATILARQYHFNYT). Residues 228 to 258 (WPFRRGDGNPTMVSSPHTPKAPKHAPRPPSR) are disordered.

The chain is F-box protein At4g35930 from Arabidopsis thaliana (Mouse-ear cress).